We begin with the raw amino-acid sequence, 625 residues long: Probable thymidylate synthase (625 aa).

A disordered region spans residues 224–323 (AVKNIDGQDD…PEPPVPFTSS (100 aa)). The span at 243-257 (EEYDDDDDDDVDDNE) shows a compositional bias: acidic residues. Polar residues-rich tracts occupy residues 258 to 269 (QSNSMIETSANA) and 293 to 312 (SQAP…NVTT). Residues Arg-350 and 477–478 (RR) each bind dUMP. Cys-497 acts as the Nucleophile in catalysis. DUMP contacts are provided by residues 524 to 527 (RSAD), Asn-535, and 565 to 567 (HIY). Residue Asp-527 participates in (6R)-5,10-methylene-5,6,7,8-tetrahydrofolate binding.

It in the N-terminal section; belongs to the HFCD (homo-oligomeric flavin containing Cys decarboxylase) superfamily. This sequence in the C-terminal section; belongs to the thymidylate synthase family.

The protein resides in the cytoplasm. The catalysed reaction is dUMP + (6R)-5,10-methylene-5,6,7,8-tetrahydrofolate = 7,8-dihydrofolate + dTMP. It participates in pyrimidine metabolism; dTTP biosynthesis. Required for both nuclear and mitochondrial DNA synthesis. The polypeptide is Probable thymidylate synthase (Schizosaccharomyces pombe (strain 972 / ATCC 24843) (Fission yeast)).